A 356-amino-acid chain; its full sequence is Protein RecA (356 aa).

An ATP-binding site is contributed by 67-74 (GPESSGKT).

It belongs to the RecA family.

It is found in the cytoplasm. In terms of biological role, can catalyze the hydrolysis of ATP in the presence of single-stranded DNA, the ATP-dependent uptake of single-stranded DNA by duplex DNA, and the ATP-dependent hybridization of homologous single-stranded DNAs. It interacts with LexA causing its activation and leading to its autocatalytic cleavage. In Yersinia pestis bv. Antiqua (strain Angola), this protein is Protein RecA.